Reading from the N-terminus, the 296-residue chain is NAD kinase (296 aa).

Catalysis depends on D72, which acts as the Proton acceptor. Residues 72-73, 146-147, R157, K174, D176, 187-192, and Q247 contribute to the NAD(+) site; these read DG, ND, and TAYALS.

This sequence belongs to the NAD kinase family. A divalent metal cation is required as a cofactor.

It is found in the cytoplasm. It carries out the reaction NAD(+) + ATP = ADP + NADP(+) + H(+). Functionally, involved in the regulation of the intracellular balance of NAD and NADP, and is a key enzyme in the biosynthesis of NADP. Catalyzes specifically the phosphorylation on 2'-hydroxyl of the adenosine moiety of NAD to yield NADP. This is NAD kinase from Pseudomonas syringae pv. syringae (strain B728a).